The chain runs to 309 residues: NAD-dependent protein deacylase sirtuin-5B, mitochondrial (309 aa).

The N-terminal 35 residues, 1 to 35 (MILLPFHTRRLVSHVYCGLKPASQNKGIALEMTRP), are a transit peptide targeting the mitochondrion. The region spanning 36-306 (SSNLANFREA…PPALARHETE (271 aa)) is the Deacetylase sirtuin-type domain. 57–76 (GAGVSAESGVPTIIGAGGYW) is a binding site for NAD(+). Residues tyrosine 101 and arginine 104 each contribute to the substrate site. NAD(+) is bound at residue 139 to 142 (QNID). The active-site Proton acceptor is the histidine 157. 4 residues coordinate Zn(2+): cysteine 165, cysteine 168, cysteine 206, and cysteine 211. NAD(+) contacts are provided by residues 248 to 250 (GTS), 274 to 276 (NME), and cysteine 292.

It belongs to the sirtuin family. Class III subfamily. The cofactor is Zn(2+).

The protein localises to the mitochondrion. Its subcellular location is the cytoplasm. It localises to the cytosol. The protein resides in the nucleus. The enzyme catalyses N(6)-malonyl-L-lysyl-[protein] + NAD(+) + H2O = 2''-O-malonyl-ADP-D-ribose + nicotinamide + L-lysyl-[protein]. It carries out the reaction N(6)-succinyl-L-lysyl-[protein] + NAD(+) + H2O = 2''-O-succinyl-ADP-D-ribose + nicotinamide + L-lysyl-[protein]. It catalyses the reaction N(6)-glutaryl-L-lysyl-[protein] + NAD(+) + H2O = 2''-O-glutaryl-ADP-D-ribose + nicotinamide + L-lysyl-[protein]. NAD-dependent lysine demalonylase, desuccinylase and deglutarylase that specifically removes malonyl, succinyl and glutaryl groups on target proteins. Has weak NAD-dependent protein deacetylase activity; however this activity may not be physiologically relevant in vivo. This chain is NAD-dependent protein deacylase sirtuin-5B, mitochondrial (sirt5-b), found in Xenopus laevis (African clawed frog).